The primary structure comprises 204 residues: N-(5'-phosphoribosyl)anthranilate isomerase (204 aa).

The protein belongs to the TrpF family.

The catalysed reaction is N-(5-phospho-beta-D-ribosyl)anthranilate = 1-(2-carboxyphenylamino)-1-deoxy-D-ribulose 5-phosphate. The protein operates within amino-acid biosynthesis; L-tryptophan biosynthesis; L-tryptophan from chorismate: step 3/5. The polypeptide is N-(5'-phosphoribosyl)anthranilate isomerase (Geobacter sp. (strain M21)).